We begin with the raw amino-acid sequence, 960 residues long: Ran GTPase-activating protein 2 (960 aa).

LRR repeat units follow at residues 69–92 (HLNL…LIAE), 132–156 (GCRL…LYNF), 162–185 (LYSL…VGKA), 227–254 (LGTL…AFRM), and 313–340 (RDCL…CFNS). The disordered stretch occupies residues 370–408 (NIDFGRRGDDELLSSDEEEEQGAEDASMEEDAFNTSRET). Over residues 380 to 401 (ELLSSDEEEEQGAEDASMEEDA) the composition is skewed to acidic residues. LRR repeat units lie at residues 475–498 (ASSM…VIAK), 538–561 (GCKI…ALKD), 568–595 (SFSL…LTEC), and 663–685 (NRNL…KALA). Positions 777–819 (PENVNVGDEDDDLGSLDGDQEEYNSKSSDSEDADLDDDDEDDD) are disordered. Composition is skewed to acidic residues over residues 783–798 (GDED…DQEE) and 806–819 (SEDA…EDDD).

The protein resides in the nucleus. Functionally, GTPase system comprising ran-1, ran-2 and ran-3 is essential in nucleocytoplasmic trafficking. Ran-2 is a GTPase activator for the nuclear RAS-related regulatory protein Ran, converting it to the putatively inactive GDP-bound state. Required for correct chromosome alignment and segregation on the metaphase plate. The chain is Ran GTPase-activating protein 2 (ran-2) from Caenorhabditis elegans.